Consider the following 28-residue polypeptide: Chaperonin GroEL (28 aa).

Belongs to the chaperonin (HSP60) family. In terms of assembly, forms a cylinder of 14 subunits composed of two heptameric rings stacked back-to-back. Interacts with the co-chaperonin GroES.

It is found in the cytoplasm. The enzyme catalyses ATP + H2O + a folded polypeptide = ADP + phosphate + an unfolded polypeptide.. Together with its co-chaperonin GroES, plays an essential role in assisting protein folding. The GroEL-GroES system forms a nano-cage that allows encapsulation of the non-native substrate proteins and provides a physical environment optimized to promote and accelerate protein folding. This is Chaperonin GroEL from Mycolicibacterium smegmatis (Mycobacterium smegmatis).